The following is a 462-amino-acid chain: A-type ATP synthase subunit B (462 aa).

It belongs to the ATPase alpha/beta chains family. Has multiple subunits with at least A(3), B(3), C, D, E, F, H, I and proteolipid K(x).

The protein resides in the cell membrane. Its function is as follows. Component of the A-type ATP synthase that produces ATP from ADP in the presence of a proton gradient across the membrane. The B chain is a regulatory subunit. The chain is A-type ATP synthase subunit B from Methanococcus vannielii (strain ATCC 35089 / DSM 1224 / JCM 13029 / OCM 148 / SB).